A 76-amino-acid chain; its full sequence is U7-lycotoxin-Ls1b (76 aa).

Residues 1–22 form the signal peptide; that stretch reads MKLISFTGLALLLIVSLIDVEA. Positions 23-26 are excised as a propeptide; sequence QNEG.

Belongs to the neurotoxin 19 (CSTX) family. 07 (U7-Lctx) subfamily. Post-translationally, contains 4 disulfide bonds. Expressed by the venom gland.

The protein resides in the secreted. This is U7-lycotoxin-Ls1b from Lycosa singoriensis (Wolf spider).